The sequence spans 88 residues: EKC/KEOPS complex subunit SPAC4H3.13 (88 aa).

It belongs to the CTAG/PCC1 family. Component of the EKC/KEOPS complex composed of at least of SPAP27G11.07c/BUD32, cgi121, gon7, pgp2 and SPAC4H3.13/PCC1; the whole complex dimerizes.

It is found in the cytoplasm. The protein localises to the nucleus. The protein resides in the chromosome. Its subcellular location is the telomere. Component of the EKC/KEOPS complex that is required for the formation of a threonylcarbamoyl group on adenosine at position 37 (t(6)A37) in tRNAs that read codons beginning with adenine. The complex is probably involved in the transfer of the threonylcarbamoyl moiety of threonylcarbamoyl-AMP (TC-AMP) to the N6 group of A37. SPAC4H3.13/PCC1 functions as a dimerization module for the complex. The EKC/KEOPS complex also promotes both telomere uncapping and telomere elongation. The complex is required for efficient recruitment of transcriptional coactivators. This Schizosaccharomyces pombe (strain 972 / ATCC 24843) (Fission yeast) protein is EKC/KEOPS complex subunit SPAC4H3.13.